A 149-amino-acid chain; its full sequence is DnaJ homolog subfamily C member 24 (149 aa).

Residues 11–82 form the J domain; that stretch reads DWYSILGADP…ETKREYDLQR (72 aa). The region spanning 93-148 is the DPH-type MB domain; that stretch reads VDAQVYLEEMSWNEGDHSFYLSCRCGGKYSVSKDEAEEVSLISCDTCSLIIELLHY. Residues C115, C117, C136, and C139 each contribute to the Zn(2+) site.

The protein belongs to the DPH4 family. As to quaternary structure, monomer and homooligomer. Iron binding promotes oligomerization.

It is found in the cytoplasm. It localises to the cytoskeleton. It functions in the pathway protein modification; peptidyl-diphthamide biosynthesis. Stimulates the ATPase activity of several Hsp70-type chaperones. This ability is enhanced by iron-binding. The iron-bound form is redox-active and can function as electron carrier. Plays a role in the diphthamide biosynthesis, a post-translational modification of histidine which occurs in translation elongation factor 2 (EEF2) which can be ADP-ribosylated by diphtheria toxin and by Pseudomonas exotoxin A (Eta). The protein is DnaJ homolog subfamily C member 24 of Homo sapiens (Human).